The chain runs to 88 residues: DNA-directed RNA polymerase subunit omega (88 aa).

Belongs to the RNA polymerase subunit omega family. The RNAP catalytic core consists of 2 alpha, 1 beta, 1 beta' and 1 omega subunit. When a sigma factor is associated with the core the holoenzyme is formed, which can initiate transcription.

It catalyses the reaction RNA(n) + a ribonucleoside 5'-triphosphate = RNA(n+1) + diphosphate. Functionally, promotes RNA polymerase assembly. Latches the N- and C-terminal regions of the beta' subunit thereby facilitating its interaction with the beta and alpha subunits. This chain is DNA-directed RNA polymerase subunit omega, found in Haemophilus influenzae (strain PittEE).